An 825-amino-acid polypeptide reads, in one-letter code: Quinic acid utilization activator (825 aa).

The segment covering 1–12 has biased composition (polar residues); that stretch reads MSSDTRQTSGGN. The segment at 1 to 45 is disordered; the sequence is MSSDTRQTSGGNARSKRRLTDAVDEDGRPTATAEDPTSNPKRQRV. Residues 18–28 show a composition bias toward basic and acidic residues; the sequence is RLTDAVDEDGR. The segment at residues 49–76 is a DNA-binding region (zn(2)-C6 fungal-type); that stretch reads CDSCRSKKDKCDGAQPICSTCASLSRPC. Disordered regions lie at residues 160–186, 204–224, and 658–683; these read EQPE…SSVL, QSPL…TTRL, and GSQR…SLPG. A compositionally biased stretch (basic and acidic residues) spans 165–174; that stretch reads DQERSARGEI. Positions 658 to 672 are enriched in polar residues; it reads GSQRRPRHATQQGTH.

Its subcellular location is the nucleus. Transcription activation of genes for enzymes and proteins of quinate metabolism by binding to a 16 base-pair sequence (consensus 5'-GGATAANNNNTTATCC-3') in front of each qut gene. The polypeptide is Quinic acid utilization activator (qutA) (Emericella nidulans (strain FGSC A4 / ATCC 38163 / CBS 112.46 / NRRL 194 / M139) (Aspergillus nidulans)).